We begin with the raw amino-acid sequence, 130 residues long: Flagellar assembly factor FliW (130 aa).

It belongs to the FliW family. Interacts with translational regulator CsrA and flagellin(s).

It localises to the cytoplasm. Its function is as follows. Acts as an anti-CsrA protein, binds CsrA and prevents it from repressing translation of its target genes, one of which is flagellin. Binds to flagellin and participates in the assembly of the flagellum. This Borrelia turicatae (strain 91E135) protein is Flagellar assembly factor FliW.